The chain runs to 267 residues: Exosome complex component Rrp42 (267 aa).

The protein belongs to the RNase PH family. Rrp42 subfamily. As to quaternary structure, component of the archaeal exosome complex. Forms a hexameric ring-like arrangement composed of 3 Rrp41-Rrp42 heterodimers. The hexameric ring associates with a trimer of Rrp4 and/or Csl4 subunits.

The protein localises to the cytoplasm. Functionally, non-catalytic component of the exosome, which is a complex involved in RNA degradation. Contributes to the structuring of the Rrp41 active site. The chain is Exosome complex component Rrp42 from Methanopyrus kandleri (strain AV19 / DSM 6324 / JCM 9639 / NBRC 100938).